Here is a 269-residue protein sequence, read N- to C-terminus: Indole-3-glycerol phosphate synthase (269 aa).

Belongs to the TrpC family.

The catalysed reaction is 1-(2-carboxyphenylamino)-1-deoxy-D-ribulose 5-phosphate + H(+) = (1S,2R)-1-C-(indol-3-yl)glycerol 3-phosphate + CO2 + H2O. Its pathway is amino-acid biosynthesis; L-tryptophan biosynthesis; L-tryptophan from chorismate: step 4/5. This chain is Indole-3-glycerol phosphate synthase, found in Rhodococcus jostii (strain RHA1).